Reading from the N-terminus, the 234-residue chain is UDP-2,3-diacylglucosamine hydrolase (234 aa).

Positions 9, 11, 42, 80, and 115 each coordinate Mn(2+). 80 to 81 serves as a coordination point for substrate; it reads NR. Residues Asp123, Ser161, Lys165, Lys168, and His196 each coordinate substrate. Positions 196 and 198 each coordinate Mn(2+).

This sequence belongs to the LpxH family. The cofactor is Mn(2+).

It is found in the cell inner membrane. It catalyses the reaction UDP-2-N,3-O-bis[(3R)-3-hydroxytetradecanoyl]-alpha-D-glucosamine + H2O = 2-N,3-O-bis[(3R)-3-hydroxytetradecanoyl]-alpha-D-glucosaminyl 1-phosphate + UMP + 2 H(+). It functions in the pathway glycolipid biosynthesis; lipid IV(A) biosynthesis; lipid IV(A) from (3R)-3-hydroxytetradecanoyl-[acyl-carrier-protein] and UDP-N-acetyl-alpha-D-glucosamine: step 4/6. In terms of biological role, hydrolyzes the pyrophosphate bond of UDP-2,3-diacylglucosamine to yield 2,3-diacylglucosamine 1-phosphate (lipid X) and UMP by catalyzing the attack of water at the alpha-P atom. Involved in the biosynthesis of lipid A, a phosphorylated glycolipid that anchors the lipopolysaccharide to the outer membrane of the cell. This is UDP-2,3-diacylglucosamine hydrolase from Histophilus somni (strain 2336) (Haemophilus somnus).